Here is a 301-residue protein sequence, read N- to C-terminus: HPr kinase/phosphorylase (301 aa).

Active-site residues include histidine 134 and lysine 155. 149–156 (GKSGLGKS) contacts ATP. A Mg(2+)-binding site is contributed by serine 156. Aspartate 173 acts as the Proton acceptor; for phosphorylation activity. Proton donor; for dephosphorylation activity in catalysis. An important for the catalytic mechanism of both phosphorylation and dephosphorylation region spans residues 196–205 (LEVRGLGIIN). Residue glutamate 197 participates in Mg(2+) binding. Arginine 239 is an active-site residue. Residues 260 to 265 (PITPGK) form an important for the catalytic mechanism of dephosphorylation region.

This sequence belongs to the HPrK/P family. As to quaternary structure, homohexamer. Mg(2+) serves as cofactor.

It carries out the reaction [HPr protein]-L-serine + ATP = [HPr protein]-O-phospho-L-serine + ADP + H(+). The catalysed reaction is [HPr protein]-O-phospho-L-serine + phosphate + H(+) = [HPr protein]-L-serine + diphosphate. Its function is as follows. Catalyzes the ATP- as well as the pyrophosphate-dependent phosphorylation of a specific serine residue in HPr, a phosphocarrier protein of the phosphoenolpyruvate-dependent sugar phosphotransferase system (PTS). HprK/P also catalyzes the pyrophosphate-producing, inorganic phosphate-dependent dephosphorylation (phosphorolysis) of seryl-phosphorylated HPr (P-Ser-HPr). The two antagonistic activities of HprK/P are regulated by several intracellular metabolites, which change their concentration in response to the absence or presence of rapidly metabolisable carbon sources (glucose, fructose, etc.) in the growth medium. Therefore, by controlling the phosphorylation state of HPr, HPrK/P is a sensor enzyme that plays a major role in the regulation of carbon metabolism and sugar transport: it mediates carbon catabolite repression (CCR), and regulates PTS-catalyzed carbohydrate uptake and inducer exclusion. In Malacoplasma penetrans (strain HF-2) (Mycoplasma penetrans), this protein is HPr kinase/phosphorylase.